Reading from the N-terminus, the 873-residue chain is Calmodulin-dependent glutamylase SidJ (873 aa).

The segment at 16–90 is disordered; that stretch reads QSEDNPSETA…TTSTTKQKGP (75 aa). Residues 22–58 show a composition bias toward polar residues; that stretch reads SETAVETTDVSTKIKTTDTTQEESSVKTKTVVPTQPG. Residues aspartate 542 and aspartate 545 each coordinate Mg(2+). The disordered stretch occupies residues 851-873; that stretch reads NLSEKSDIDSEKPESERTTDKRL.

As to quaternary structure, interacts with host calmodulin/CALM1; this interaction is required for glutamylase activity. It depends on Mg(2+) as a cofactor.

The enzyme catalyses L-glutamyl-[protein] + L-glutamate + ATP = gamma-L-glutamyl-L-glutamyl-[protein] + ADP + phosphate + H(+). It catalyses the reaction (L-glutamyl)(n)-gamma-L-glutamyl-L-glutamyl-[protein] + L-glutamate + ATP = (L-glutamyl)(n+1)-gamma-L-glutamyl-L-glutamyl-[protein] + ADP + phosphate + H(+). Glytamylation catalyzed by SidJ requires host calmodulin and can be regulated by intracellular changes in Ca2+ concentrations. Also requires ATP. Glutamylase that mediates the covalent attachment of glutamate moieties to SdeA on one of the catalytic residues that is required for its mono-ADP-ribosyltransferase activity. In turn, inhibits SdeA ubiquitinating activity. Also glutamylates related SdeB, SdeC and SidE. Glutamylase activity only occurs in the host since it requires host calmodulin. May also reverse the SdeA-mediated substrate ubiquitination by cleaving the phosphodiester bond that links phosphoribosylated ubiquitin to protein substrates via its deubiquitinase activity. This Legionella pneumophila subsp. pneumophila (strain Philadelphia 1 / ATCC 33152 / DSM 7513) protein is Calmodulin-dependent glutamylase SidJ.